Consider the following 757-residue polypeptide: Receptor protein kinase-like protein At4g34220 (757 aa).

Residues 1–26 form the signal peptide; that stretch reads MTSNRSNLLFSLVLFHFLFVPTQLQA. 7 LRR repeats span residues 104–126, 128–150, 152–174, 176–198, 199–219, 220–242, and 245–267; these read YLRI…VFNA, ELQS…VNSV, NLQL…ISLL, NLTV…FEAA, QILD…LGGK, SLHY…FAEK, and ANAT…LSLL. Residues 339–359 traverse the membrane as a helical segment; the sequence is IAAITVADIVGLAFIGLLVLY. The 283-residue stretch at 471 to 753 folds into the Protein kinase domain; it reads KASAYILGTT…KELVQVLEKI (283 aa). Ser473 carries the phosphoserine modification. Thr494 bears the Phosphothreonine mark. Ser553 carries the phosphoserine modification. A disordered region spans residues 633 to 654; the sequence is ARESHTTGPTSSSPYQPPEWST. Phosphothreonine is present on residues Thr638 and Thr639. Over residues 638–654 the composition is skewed to polar residues; the sequence is TTGPTSSSPYQPPEWST.

This sequence belongs to the protein kinase superfamily.

It localises to the membrane. This chain is Receptor protein kinase-like protein At4g34220, found in Arabidopsis thaliana (Mouse-ear cress).